We begin with the raw amino-acid sequence, 320 residues long: Porphobilinogen deaminase (320 aa).

Residue Cys-251 is modified to S-(dipyrrolylmethanemethyl)cysteine.

It belongs to the HMBS family. Monomer. Dipyrromethane is required as a cofactor.

The enzyme catalyses 4 porphobilinogen + H2O = hydroxymethylbilane + 4 NH4(+). It participates in porphyrin-containing compound metabolism; protoporphyrin-IX biosynthesis; coproporphyrinogen-III from 5-aminolevulinate: step 2/4. Tetrapolymerization of the monopyrrole PBG into the hydroxymethylbilane pre-uroporphyrinogen in several discrete steps. The chain is Porphobilinogen deaminase from Phenylobacterium zucineum (strain HLK1).